The chain runs to 138 residues: Acidic phospholipase A2 beta (138 aa).

The N-terminal stretch at 1-16 (MRTLWIVAVLLLGVEG) is a signal peptide. 7 disulfide bridges follow: cysteine 42-cysteine 131, cysteine 44-cysteine 60, cysteine 59-cysteine 111, cysteine 65-cysteine 138, cysteine 66-cysteine 104, cysteine 73-cysteine 97, and cysteine 91-cysteine 102. Ca(2+) is bound by residues tyrosine 43, glycine 45, and glycine 47. The active site involves histidine 63. Position 64 (aspartate 64) interacts with Ca(2+). Residue aspartate 105 is part of the active site.

Belongs to the phospholipase A2 family. Group II subfamily. D49 sub-subfamily. As to quaternary structure, dimer. The cofactor is Ca(2+). In terms of tissue distribution, expressed by the venom gland.

The protein localises to the secreted. The catalysed reaction is a 1,2-diacyl-sn-glycero-3-phosphocholine + H2O = a 1-acyl-sn-glycero-3-phosphocholine + a fatty acid + H(+). Its function is as follows. PLA2 catalyzes the calcium-dependent hydrolysis of the 2-acyl groups in 3-sn-phosphoglycerides. This chain is Acidic phospholipase A2 beta, found in Crotalus adamanteus (Eastern diamondback rattlesnake).